Consider the following 38-residue polypeptide: Large ribosomal subunit protein bL12 (38 aa).

It belongs to the bacterial ribosomal protein bL12 family. As to quaternary structure, homodimer. Part of the ribosomal stalk of the 50S ribosomal subunit. Forms a multimeric L10(L12)X complex, where L10 forms an elongated spine to which 2 to 4 L12 dimers bind in a sequential fashion. Binds GTP-bound translation factors.

Forms part of the ribosomal stalk which helps the ribosome interact with GTP-bound translation factors. Is thus essential for accurate translation. The protein is Large ribosomal subunit protein bL12 (rplL) of Salinivibrio costicola (Vibrio costicola).